The primary structure comprises 709 residues: DNA ligase (709 aa).

NAD(+) contacts are provided by residues 34-38, 83-84, and Glu115; these read DAEYD and SL. The active-site N6-AMP-lysine intermediate is the Lys117. Residues Arg138, Glu185, Lys301, and Lys325 each contribute to the NAD(+) site. 4 residues coordinate Zn(2+): Cys419, Cys422, Cys437, and Cys443. Residues 602–691 enclose the BRCT domain; the sequence is RQSDTLAGKT…AEPPPSPPPP (90 aa). Residues 679–709 form a disordered region; the sequence is GTTAEPPPSPPPPPPETNTDGNQLLLPLDGE. The segment covering 683-694 has biased composition (pro residues); that stretch reads EPPPSPPPPPPE.

This sequence belongs to the NAD-dependent DNA ligase family. LigA subfamily. It depends on Mg(2+) as a cofactor. Mn(2+) is required as a cofactor.

The enzyme catalyses NAD(+) + (deoxyribonucleotide)n-3'-hydroxyl + 5'-phospho-(deoxyribonucleotide)m = (deoxyribonucleotide)n+m + AMP + beta-nicotinamide D-nucleotide.. Its function is as follows. DNA ligase that catalyzes the formation of phosphodiester linkages between 5'-phosphoryl and 3'-hydroxyl groups in double-stranded DNA using NAD as a coenzyme and as the energy source for the reaction. It is essential for DNA replication and repair of damaged DNA. This is DNA ligase from Chloroflexus aurantiacus (strain ATCC 29364 / DSM 637 / Y-400-fl).